Reading from the N-terminus, the 1865-residue chain is Dedicator of cytokinesis protein 1 (1865 aa).

The SH3 domain occupies 9–70 (REEKYGVAFY…PASYIHLKEA (62 aa)). The region spanning 425–609 (RNDIYVTLVQ…DSFQISTLVC (185 aa)) is the C2 DOCK-type domain. The DOCKER domain occupies 1207 to 1617 (YKEIEREEMY…VEKQYGVRTM (411 aa)). A disordered region spans residues 1613–1723 (GVRTMPSGLD…FKPADSSLQQ (111 aa)). Over residues 1639-1664 (PSSSRPLSVASVSSFSSDSTPSRPGS) the composition is skewed to low complexity. The segment covering 1680-1694 (RSQDKLDKDDPDKEK) has biased composition (basic and acidic residues). Serine 1681 carries the phosphoserine modification. Positions 1687-1695 (KDDPDKEKK) are phosphoinositide-binding. Residues 1695 to 1704 (KDKKKEKRNS) are compositionally biased toward basic residues. The segment covering 1705-1716 (KHQEIFDKEFKP) has biased composition (basic and acidic residues). 4 positions are modified to phosphoserine: serine 1743, serine 1756, serine 1761, and serine 1764. Disordered regions lie at residues 1753 to 1778 (RRFSVSPASPSSQQTPPPVTPRAKLS) and 1801 to 1865 (PLPL…GIVQ). A compositionally biased stretch (low complexity) spans 1756–1766 (SVSPASPSSQQ). Threonine 1767 and threonine 1772 each carry phosphothreonine. The interaction with NCK2 second and third SH3 domain (minor) stretch occupies residues 1793–1819 (MDVADVPPPLPLKGNMADYGNLMENQD). An SH3-binding; interaction with CRK motif is present at residues 1799–1805 (PPPLPLK). Positions 1820–1836 (MMVSPTSPPPPPPQRQQ) are interaction with NCK2 third SH3 domain (major). Residues 1825–1851 (TSPPPPPPQRQQPPPLPSKTPPPPPPK) are compositionally biased toward pro residues. The interval 1837–1852 (PPPLPSKTPPPPPPKT) is interaction with NCK2 (minor). The SH3-binding; interaction with CRK motif lies at 1838 to 1843 (PPLPSK). Serine 1858 is modified (phosphoserine).

Belongs to the DOCK family. As to quaternary structure, interacts with the SH3 domains of CRK and NCK2 via multiple sites. Interacts with nucleotide-free RAC1 via its DOCKER domain. Interacts with ELMO1, ELMO2 and probably ELMO3 via its SH3 domain. Interacts with RAC1. Interacts with ELMO1 and ADGRB1. Identified in a complex with AUTS2 and ELMO2.

Its subcellular location is the cytoplasm. It is found in the membrane. In terms of biological role, involved in cytoskeletal rearrangements required for phagocytosis of apoptotic cells and cell motility. Along with DOCK1, mediates CRK/CRKL regulation of epithelial and endothelial cell spreading and migration on type IV collagen. Functions as a guanine nucleotide exchange factor (GEF), which activates Rac Rho small GTPases by exchanging bound GDP for free GTP. Its GEF activity may be enhanced by ELMO1. The polypeptide is Dedicator of cytokinesis protein 1 (Dock1) (Mus musculus (Mouse)).